The sequence spans 178 residues: Translation initiation factor IF-3 (178 aa).

The protein belongs to the IF-3 family. In terms of assembly, monomer.

The protein localises to the cytoplasm. IF-3 binds to the 30S ribosomal subunit and shifts the equilibrium between 70S ribosomes and their 50S and 30S subunits in favor of the free subunits, thus enhancing the availability of 30S subunits on which protein synthesis initiation begins. The polypeptide is Translation initiation factor IF-3 (Picosynechococcus sp. (strain ATCC 27264 / PCC 7002 / PR-6) (Agmenellum quadruplicatum)).